A 301-amino-acid chain; its full sequence is Pyridoxal 5'-phosphate synthase subunit PdxS (301 aa).

Asp31 is a D-ribose 5-phosphate binding site. Lys88 functions as the Schiff-base intermediate with D-ribose 5-phosphate in the catalytic mechanism. Position 160 (Gly160) interacts with D-ribose 5-phosphate. Position 172 (Lys172) interacts with D-glyceraldehyde 3-phosphate. D-ribose 5-phosphate contacts are provided by residues Gly221 and 242-243 (GS).

It belongs to the PdxS/SNZ family. In terms of assembly, in the presence of PdxT, forms a dodecamer of heterodimers.

The enzyme catalyses aldehydo-D-ribose 5-phosphate + D-glyceraldehyde 3-phosphate + L-glutamine = pyridoxal 5'-phosphate + L-glutamate + phosphate + 3 H2O + H(+). Its pathway is cofactor biosynthesis; pyridoxal 5'-phosphate biosynthesis. Functionally, catalyzes the formation of pyridoxal 5'-phosphate from ribose 5-phosphate (RBP), glyceraldehyde 3-phosphate (G3P) and ammonia. The ammonia is provided by the PdxT subunit. Can also use ribulose 5-phosphate and dihydroxyacetone phosphate as substrates, resulting from enzyme-catalyzed isomerization of RBP and G3P, respectively. This Methanosarcina mazei (strain ATCC BAA-159 / DSM 3647 / Goe1 / Go1 / JCM 11833 / OCM 88) (Methanosarcina frisia) protein is Pyridoxal 5'-phosphate synthase subunit PdxS.